A 174-amino-acid polypeptide reads, in one-letter code: Chromophore lyase CpcS/CpeS 1 (174 aa).

This sequence belongs to the CpcS/CpeS biliprotein lyase family.

Functionally, covalently attaches a chromophore to Cys residue(s) of phycobiliproteins. This chain is Chromophore lyase CpcS/CpeS 1, found in Trichodesmium erythraeum (strain IMS101).